A 127-amino-acid chain; its full sequence is Protein chibby homolog 1 (127 aa).

Residues 1-25 form a disordered region; the sequence is MPLFGSIFSPKKTPPRKSASLSNLH. Residues Ser9 and Ser20 each carry the phosphoserine modification. The minimal region for the interaction with PKD2 stretch occupies residues 60–112; that stretch reads VADSVISGGVDRRETQRLRKRNQQLEEENNLLRLKVDILLDMLSETTAESHLK. Positions 68 to 110 form a coiled coil; the sequence is GVDRRETQRLRKRNQQLEEENNLLRLKVDILLDMLSETTAESH. A leucine-zipper; mediates homodimerization region spans residues 77 to 98; the sequence is LRKRNQQLEEENNLLRLKVDIL.

The protein belongs to the chibby family. In terms of assembly, homodimer. Homodimerization is essential for nuclear localization and interaction with KPNA4 but is dispensable for interaction with CTNNB1. Interacts with polycystin-2/PKD2 and GM130. Interacts with the C-terminal region of CTNNB1. Interacts (C-terminus) with TCIM (C-terminus), TCIM competes with CTNNB1 for the interaction with CBY1. Interacts with FAM92A; this interaction facilitates targeting of FAM92A to cilium basal body. Interacts with CIBAR2. Interacts with KPNA4. Found in heart, brain, lung, liver, muscle, kidney and testis. Levels are approximately 3-fold higher in embryonic and adult heart than in lung or liver.

It is found in the nucleus speckle. Its subcellular location is the cytoplasm. The protein resides in the cytoskeleton. The protein localises to the cilium basal body. It localises to the microtubule organizing center. It is found in the centrosome. Its subcellular location is the centriole. The protein resides in the golgi apparatus. The protein localises to the trans-Golgi network. It localises to the cell projection. It is found in the cilium. Its subcellular location is the flagellum. The protein resides in the nucleus. Functionally, inhibits the Wnt/Wingless pathway by binding to CTNNB1/beta-catenin and inhibiting beta-catenin-mediated transcriptional activation through competition with TCF/LEF transcription factors. Has also been shown to play a role in regulating the intracellular trafficking of polycystin-2/PKD2 and possibly of other intracellular proteins. Promotes adipocyte and cardiomyocyte differentiation. In Mus musculus (Mouse), this protein is Protein chibby homolog 1 (Cby1).